A 309-amino-acid polypeptide reads, in one-letter code: Olfactory receptor 8B4 (309 aa).

Topologically, residues 1–25 are extracellular; it reads MTLRNSSSVTEFILVGLSEQPELQL. A glycan (N-linked (GlcNAc...) asparagine) is linked at Asn5. The chain crosses the membrane as a helical span at residues 26-46; that stretch reads PLFLLFLGIYVFTVVGNLGLI. Residues 47–54 are Cytoplasmic-facing; that stretch reads TLIGINPS. The chain crosses the membrane as a helical span at residues 55–75; sequence LHTPMYFFLFNLSFIDLCYSC. Residues 76 to 98 are Extracellular-facing; that stretch reads VFTPKMLNDFVSESIISYVGCMT. A disulfide bridge connects residues Cys96 and Cys188. The chain crosses the membrane as a helical span at residues 99 to 119; the sequence is QLFFFCFFVNSECYVLVSMAY. At 120–138 the chain is on the cytoplasmic side; sequence DRYVAICNPLLYMVTMSPR. Residues 139–159 traverse the membrane as a helical segment; sequence VCFLLMFGSYVVGFAGAMAHT. Residues 160–196 lie on the Extracellular side of the membrane; it reads GSMLRLTFCDSNVIDHYLCDVLPLLQLSCTSTHVSEL. Residues 197–216 form a helical membrane-spanning segment; it reads VFFIVVGVITMLSSISIVIS. Over 217-236 the chain is Cytoplasmic; it reads YALILSNILCIPSAEGRSKA. The helical transmembrane segment at 237–257 threads the bilayer; sequence FSTWGSHIIAVALFFGSGTFT. Residues 258 to 270 are Extracellular-facing; it reads YLTTSFPGSMNHG. Residues 271-291 traverse the membrane as a helical segment; that stretch reads RFASVFYTNVVPMLNPSIYSL. The Cytoplasmic segment spans residues 292–309; sequence RNKDDKLALGKTLKRVLF.

This sequence belongs to the G-protein coupled receptor 1 family.

Its subcellular location is the cell membrane. Odorant receptor. In Homo sapiens (Human), this protein is Olfactory receptor 8B4 (OR8B4).